Consider the following 273-residue polypeptide: Transmembrane protein 202 (273 aa).

A run of 4 helical transmembrane segments spans residues 53-75 (HIYIRTLCGSLCSFSLLMLIAMS), 121-141 (FFLISVFTILTGLGWLFSSWI), 155-175 (VSMLSFISATCLLLCLNLFVA), and 189-209 (LLWTYYLNWCSDIFYMFAGII). Positions 242–273 (TTVSPAKDEGPRSEMESLSVREKNLPKSGLWW) are disordered. Residues 247-266 (AKDEGPRSEMESLSVREKNL) are compositionally biased toward basic and acidic residues.

The protein localises to the membrane. This is Transmembrane protein 202 (TMEM202) from Homo sapiens (Human).